A 281-amino-acid chain; its full sequence is 2-dehydro-3-deoxyphosphooctonate aldolase (281 aa).

Belongs to the KdsA family.

Its subcellular location is the cytoplasm. It catalyses the reaction D-arabinose 5-phosphate + phosphoenolpyruvate + H2O = 3-deoxy-alpha-D-manno-2-octulosonate-8-phosphate + phosphate. It functions in the pathway carbohydrate biosynthesis; 3-deoxy-D-manno-octulosonate biosynthesis; 3-deoxy-D-manno-octulosonate from D-ribulose 5-phosphate: step 2/3. It participates in bacterial outer membrane biogenesis; lipopolysaccharide biosynthesis. This chain is 2-dehydro-3-deoxyphosphooctonate aldolase, found in Pseudomonas aeruginosa (strain UCBPP-PA14).